Here is a 68-residue protein sequence, read N- to C-terminus: Small integral membrane protein 45 (68 aa).

Residues 7-27 (WFVPVYLVISVLILVGFGACI) traverse the membrane as a helical segment.

In terms of tissue distribution, highly expressed in brain.

It localises to the nucleus. The protein localises to the cytoplasm. It is found in the membrane. In terms of biological role, plays a role in the regulation of neuron maturation. The protein is Small integral membrane protein 45 of Homo sapiens (Human).